The primary structure comprises 336 residues: Flap endonuclease 1 (336 aa).

An N-domain region spans residues 1-98 (MGADIGDLFE…AEIEERKKRR (98 aa)). The Mg(2+) site is built by Asp27, Asp80, Glu151, Glu153, Asp172, Asp174, and Asp235. An I-domain region spans residues 115-256 (DAKKYAQAAG…KALNYIKTYG (142 aa)). Residues 328–336 (TQATLERWF) form an interaction with PCNA region.

The protein belongs to the XPG/RAD2 endonuclease family. FEN1 subfamily. In terms of assembly, interacts with PCNA. PCNA stimulates the nuclease activity without altering cleavage specificity. It depends on Mg(2+) as a cofactor.

Its function is as follows. Structure-specific nuclease with 5'-flap endonuclease and 5'-3' exonuclease activities involved in DNA replication and repair. During DNA replication, cleaves the 5'-overhanging flap structure that is generated by displacement synthesis when DNA polymerase encounters the 5'-end of a downstream Okazaki fragment. Binds the unpaired 3'-DNA end and kinks the DNA to facilitate 5' cleavage specificity. Cleaves one nucleotide into the double-stranded DNA from the junction in flap DNA, leaving a nick for ligation. Also involved in the base excision repair (BER) pathway. Acts as a genome stabilization factor that prevents flaps from equilibrating into structures that lead to duplications and deletions. Also possesses 5'-3' exonuclease activity on nicked or gapped double-stranded DNA. The polypeptide is Flap endonuclease 1 (Archaeoglobus fulgidus (strain ATCC 49558 / DSM 4304 / JCM 9628 / NBRC 100126 / VC-16)).